A 442-amino-acid polypeptide reads, in one-letter code: Cyclin-A1-2 (442 aa).

Composition is skewed to polar residues over residues 1–12 (MSSSSRNLSQEN) and 39–63 (ITNQKNGSRNPSPSSTLVNCSNKIG). Residues 1–72 (MSSSSRNLSQ…GQSKKAPKPA (72 aa)) are disordered.

It belongs to the cyclin family. Cyclin AB subfamily. Interacts with CDC20-1, CDC20-2, FZR2/CCS52A1 and FZR1/CCS52A2. In terms of tissue distribution, expressed in roots, stems and flowers.

The protein localises to the cytoplasm. Its subcellular location is the nucleus. Its function is as follows. Involved in the regulation of male meiosis progression. The chain is Cyclin-A1-2 (CYCA1-2) from Arabidopsis thaliana (Mouse-ear cress).